The sequence spans 53 residues: IgW transmembrane form Tm1T3/Tm6T3/Tm3C4 (53 aa).

The disordered stretch occupies residues valine 1–asparagine 25. Acidic residues predominate over residues glycine 13–aspartate 24. A helical membrane pass occupies residues valine 29–valine 49.

Expressed in the spleen, pancreas, peripheral blood lymphocytes and at low levels in the epigonal organ.

The protein localises to the membrane. This is IgW transmembrane form Tm1T3/Tm6T3/Tm3C4 from Ginglymostoma cirratum (Nurse shark).